The following is a 383-amino-acid chain: Succinate--CoA ligase [ADP-forming] subunit beta 2 (383 aa).

An ATP-grasp domain is found at 9 to 231 (RELFKEHGIV…QEDADSLEAR (223 aa)). Residues K45, 52–54 (GRG), C94, and E99 contribute to the ATP site. Mg(2+) contacts are provided by N187 and D201. Substrate-binding positions include N251 and 308 to 310 (GIT).

It belongs to the succinate/malate CoA ligase beta subunit family. In terms of assembly, heterotetramer of two alpha and two beta subunits. The cofactor is Mg(2+).

It catalyses the reaction succinate + ATP + CoA = succinyl-CoA + ADP + phosphate. It carries out the reaction GTP + succinate + CoA = succinyl-CoA + GDP + phosphate. The protein operates within carbohydrate metabolism; tricarboxylic acid cycle; succinate from succinyl-CoA (ligase route): step 1/1. Succinyl-CoA synthetase functions in the citric acid cycle (TCA), coupling the hydrolysis of succinyl-CoA to the synthesis of either ATP or GTP and thus represents the only step of substrate-level phosphorylation in the TCA. The beta subunit provides nucleotide specificity of the enzyme and binds the substrate succinate, while the binding sites for coenzyme A and phosphate are found in the alpha subunit. The sequence is that of Succinate--CoA ligase [ADP-forming] subunit beta 2 from Streptomyces coelicolor (strain ATCC BAA-471 / A3(2) / M145).